The following is a 931-amino-acid chain: Protein unc-45 homolog B (931 aa).

3 TPR repeats span residues 6–39, 43–76, and 77–110; these read AAQLKEEGNRHFQLQDYKAATKSYSQALKLTKDK, ATLYRNRAACGLKMESYAQAASDASRAIDINSAD, and IKALYRRCQALEHLGKLDQAFKDVQRCATLEPRN. ARM repeat units follow at residues 169–208, 211–250, and 751–790; these read EAGAERIFQSNGVALLLQLMNTQRPELLLAAVRTLSGMCS, RARATAILHAVRIDRICSLMALENEEMSLAVCNLLQAIID, and DKLRQKIFKEKALPDIENYMFENHDQLRQAATECMCNMVL.

As to quaternary structure, interacts with HSP90 in an ATP-independent manner. Interacts with UBE4B; the interaction may target UNC45B for proteasomal degradation. As to expression, highly expressed in adult skeletal muscle and heart. Detected at intermediate levels in lung. Highly expressed in embryonic heart.

It is found in the cytoplasm. The protein resides in the myofibril. It localises to the sarcomere. The protein localises to the z line. Its subcellular location is the a band. It is found in the perinuclear region. The protein resides in the cytosol. Functionally, acts as a co-chaperone for HSP90 and is required for proper folding of the myosin motor domain. Plays a role in sarcomere formation during muscle cell development. Is necessary for normal early lens development. The sequence is that of Protein unc-45 homolog B (Unc45b) from Mus musculus (Mouse).